A 404-amino-acid polypeptide reads, in one-letter code: Corticosteroid-binding globulin (404 aa).

Positions 1–22 (MLPTLYTCLLWLSTSGLWTVQA) are cleaved as a signal peptide. N-linked (GlcNAc...) asparagine glycans are attached at residues Asn95, Asn119, and Asn175. Gln253 is a binding site for cortisol. Asn259 carries an N-linked (GlcNAc...) asparagine glycan. Gln285 contacts cortisol. Residue Asn326 is glycosylated (N-linked (GlcNAc...) asparagine). A cortisol-binding site is contributed by Trp392.

This sequence belongs to the serpin family. Post-translationally, glycosylation in position Asn-259 is needed for steroid binding.

The protein localises to the secreted. In terms of biological role, major transport protein for glucocorticoids and progestins in the blood of almost all vertebrate species. This is Corticosteroid-binding globulin (SERPINA6) from Bos taurus (Bovine).